A 480-amino-acid chain; its full sequence is ATP synthase subunit beta (480 aa).

153-160 lines the ATP pocket; that stretch reads GGAGVGKT.

The protein belongs to the ATPase alpha/beta chains family. In terms of assembly, F-type ATPases have 2 components, CF(1) - the catalytic core - and CF(0) - the membrane proton channel. CF(1) has five subunits: alpha(3), beta(3), gamma(1), delta(1), epsilon(1). CF(0) has three main subunits: a(1), b(2) and c(9-12). The alpha and beta chains form an alternating ring which encloses part of the gamma chain. CF(1) is attached to CF(0) by a central stalk formed by the gamma and epsilon chains, while a peripheral stalk is formed by the delta and b chains.

It localises to the cell membrane. It catalyses the reaction ATP + H2O + 4 H(+)(in) = ADP + phosphate + 5 H(+)(out). Functionally, produces ATP from ADP in the presence of a proton gradient across the membrane. The catalytic sites are hosted primarily by the beta subunits. The sequence is that of ATP synthase subunit beta from Lactobacillus gasseri (strain ATCC 33323 / DSM 20243 / BCRC 14619 / CIP 102991 / JCM 1131 / KCTC 3163 / NCIMB 11718 / NCTC 13722 / AM63).